Consider the following 238-residue polypeptide: Ribosomal RNA small subunit methyltransferase G (238 aa).

Residues G106, L111, 157–158 (IE), and R170 contribute to the S-adenosyl-L-methionine site.

Belongs to the methyltransferase superfamily. RNA methyltransferase RsmG family.

The protein resides in the cytoplasm. It carries out the reaction guanosine(527) in 16S rRNA + S-adenosyl-L-methionine = N(7)-methylguanosine(527) in 16S rRNA + S-adenosyl-L-homocysteine. Specifically methylates the N7 position of guanine in position 527 of 16S rRNA. The protein is Ribosomal RNA small subunit methyltransferase G of Psychrobacter cryohalolentis (strain ATCC BAA-1226 / DSM 17306 / VKM B-2378 / K5).